The following is a 369-amino-acid chain: Methionine import ATP-binding protein MetN (369 aa).

The ABC transporter domain occupies 31–266 (VEMKDVRRMF…PQSPVTQSML (236 aa)). Position 63 to 70 (63 to 70 (GRSGAGKS)) interacts with ATP.

Belongs to the ABC transporter superfamily. Methionine importer (TC 3.A.1.24) family. The complex is composed of two ATP-binding proteins (MetN), two transmembrane proteins (MetI) and a solute-binding protein (MetQ).

It localises to the cell inner membrane. It catalyses the reaction L-methionine(out) + ATP + H2O = L-methionine(in) + ADP + phosphate + H(+). It carries out the reaction D-methionine(out) + ATP + H2O = D-methionine(in) + ADP + phosphate + H(+). Functionally, part of the ABC transporter complex MetNIQ involved in methionine import. Responsible for energy coupling to the transport system. This is Methionine import ATP-binding protein MetN from Brucella abortus (strain 2308).